Here is a 678-residue protein sequence, read N- to C-terminus: DNA ligase (678 aa).

NAD(+)-binding positions include 36–40 (DSEFD), 85–86 (SL), and Glu-117. Lys-119 acts as the N6-AMP-lysine intermediate in catalysis. Residues Arg-140, Glu-177, Lys-294, and Lys-318 each contribute to the NAD(+) site. Cys-412, Cys-415, Cys-430, and Cys-436 together coordinate Zn(2+). The region spanning 595 to 678 (IIDAPLLGKT…TWWQHYGNAV (84 aa)) is the BRCT domain.

The protein belongs to the NAD-dependent DNA ligase family. LigA subfamily. Mg(2+) serves as cofactor. It depends on Mn(2+) as a cofactor.

It carries out the reaction NAD(+) + (deoxyribonucleotide)n-3'-hydroxyl + 5'-phospho-(deoxyribonucleotide)m = (deoxyribonucleotide)n+m + AMP + beta-nicotinamide D-nucleotide.. DNA ligase that catalyzes the formation of phosphodiester linkages between 5'-phosphoryl and 3'-hydroxyl groups in double-stranded DNA using NAD as a coenzyme and as the energy source for the reaction. It is essential for DNA replication and repair of damaged DNA. The sequence is that of DNA ligase from Dichelobacter nodosus (strain VCS1703A).